Reading from the N-terminus, the 132-residue chain is MASASAQSAALSAEQAKVVLAEVIQAFSAPENAVRMDEARDNACNDMGKMLQFVLPVATQIQQEVIKAYGFSCDGEGVLKFARLVKSYEAQDPEIASLSGKLKALFLPPMTLPPHGPASGGSVAASLGLALP.

At Ala2 the chain carries N-acetylalanine.

The protein belongs to the UPF0456 family.

The protein resides in the cytoplasm. Functionally, in brain, may be required for corpus callosum development. This Bos taurus (Bovine) protein is Protein C10.